Consider the following 577-residue polypeptide: Lysine-specific demethylase 7B (577 aa).

The segment at 5–56 (QLYCVCRQPYDVSRFMIECDICKDWFHGSCVEVEEHYAVDIDVYHCPNCDVH) adopts a PHD-type zinc-finger fold. The region spanning 198-354 (FSDTKMAELV…MQLRCYEMER (157 aa)) is the JmjC domain. Substrate is bound at residue Thr-247. Residues His-250 and Asp-252 each coordinate Fe cation. Lys-267 provides a ligand contact to substrate. His-322 is a Fe cation binding site. Residues 460-513 (CPSTRSAHERGSHARKTARRLRGHHHHHHRHHHHHHHHHHHNHQHSDGPKAPSH) are disordered. The segment covering 472–502 (HARKTARRLRGHHHHHHRHHHHHHHHHHHNH) has biased composition (basic residues).

This sequence belongs to the JHDM1 histone demethylase family. JHDM1D subfamily. Fe(2+) serves as cofactor. Predominantly expressed in brain.

It is found in the nucleus. In terms of biological role, histone demethylase required for brain development. Specifically demethylates dimethylated 'Lys-9' and 'Lys-27' (H3K9me2 and H3K27me2, respectively) of histone H3 and monomethylated histone H4 'Lys-20' residue (H4K20Me1), thereby playing a central role in histone code. This is Lysine-specific demethylase 7B (jhdm1db) from Danio rerio (Zebrafish).